Reading from the N-terminus, the 339-residue chain is Ketol-acid reductoisomerase (NADP(+)) (339 aa).

Residues 1 to 182 enclose the KARI N-terminal Rossmann domain; the sequence is MRVYYDRDAD…GGGRAGIIET (182 aa). Residues 24 to 27, Arg48, Ser51, Thr53, and 83 to 86 each bind NADP(+); these read YGSQ and DELQ. Residue His108 is part of the active site. An NADP(+)-binding site is contributed by Gly134. Positions 183-328 constitute a KARI C-terminal knotted domain; the sequence is TFKEECETDL…AKLRGMMPWI (146 aa). Mg(2+) contacts are provided by Asp191, Glu195, Glu227, and Glu231. Ser252 provides a ligand contact to substrate.

The protein belongs to the ketol-acid reductoisomerase family. The cofactor is Mg(2+).

It catalyses the reaction (2R)-2,3-dihydroxy-3-methylbutanoate + NADP(+) = (2S)-2-acetolactate + NADPH + H(+). The enzyme catalyses (2R,3R)-2,3-dihydroxy-3-methylpentanoate + NADP(+) = (S)-2-ethyl-2-hydroxy-3-oxobutanoate + NADPH + H(+). It participates in amino-acid biosynthesis; L-isoleucine biosynthesis; L-isoleucine from 2-oxobutanoate: step 2/4. Its pathway is amino-acid biosynthesis; L-valine biosynthesis; L-valine from pyruvate: step 2/4. Functionally, involved in the biosynthesis of branched-chain amino acids (BCAA). Catalyzes an alkyl-migration followed by a ketol-acid reduction of (S)-2-acetolactate (S2AL) to yield (R)-2,3-dihydroxy-isovalerate. In the isomerase reaction, S2AL is rearranged via a Mg-dependent methyl migration to produce 3-hydroxy-3-methyl-2-ketobutyrate (HMKB). In the reductase reaction, this 2-ketoacid undergoes a metal-dependent reduction by NADPH to yield (R)-2,3-dihydroxy-isovalerate. This Methylobacterium radiotolerans (strain ATCC 27329 / DSM 1819 / JCM 2831 / NBRC 15690 / NCIMB 10815 / 0-1) protein is Ketol-acid reductoisomerase (NADP(+)).